Consider the following 250-residue polypeptide: Probable cytokinin riboside 5'-monophosphate phosphoribohydrolase LOGL6 (250 aa).

Residues glutamate 98, 116-117, and 133-139 contribute to the substrate site; these read RK and GYGTLEE.

Belongs to the LOG family. Expressed in roots, leaves, stems, tiller buds, shoot apex, immature inflorescences and flowers.

It carries out the reaction N(6)-(dimethylallyl)adenosine 5'-phosphate + H2O = N(6)-dimethylallyladenine + D-ribose 5-phosphate. The enzyme catalyses 9-ribosyl-trans-zeatin 5'-phosphate + H2O = trans-zeatin + D-ribose 5-phosphate. In terms of biological role, cytokinin-activating enzyme working in the direct activation pathway. Phosphoribohydrolase that converts inactive cytokinin nucleotides to the biologically active free-base forms. The protein is Probable cytokinin riboside 5'-monophosphate phosphoribohydrolase LOGL6 (LOGL6) of Oryza sativa subsp. japonica (Rice).